We begin with the raw amino-acid sequence, 322 residues long: MHLIIPKDYDPKLSVKETQQAIRYIRETFQDEFGKQLNLSRLSAPMFVEKKTGLNDNLNGVEKPVSFTMQDMGDEQIEIVHSLAKWKRVALKRYGFDMHEGLYTNMNAIRKDEDLDNYHSAYVDQWDWEKVISKEERTVETLKAAVRQIFKVIKHMEHEVWYKFPQAVHHLPDEIHFLTTQELEDMYPDMTPRERENAICKKLGCVFLMQIGWKLDSGERHDGRAPDYDDWKLNGDILFWYEPLDQAIEISSMGIRVDAESMKKQLKDVDAEDRLSLPYHQMILNADVPYTIGGGIGQSRLCMLLLGKAHVGEVQAALWHKP.

This sequence belongs to the class-II aminoacyl-tRNA synthetase family. AsnA subfamily.

It is found in the cytoplasm. It carries out the reaction L-aspartate + NH4(+) + ATP = L-asparagine + AMP + diphosphate + H(+). It functions in the pathway amino-acid biosynthesis; L-asparagine biosynthesis; L-asparagine from L-aspartate (ammonia route): step 1/1. This Lactiplantibacillus plantarum (strain ATCC BAA-793 / NCIMB 8826 / WCFS1) (Lactobacillus plantarum) protein is Aspartate--ammonia ligase.